Reading from the N-terminus, the 583-residue chain is Glycine--tRNA ligase (583 aa).

Residues Arg-100 and Glu-166 each contribute to the substrate site. ATP contacts are provided by residues 198–200 (RNE), 208–213 (VRLREF), 328–329 (EV), and 443–446 (GTDR). 213-217 (FTIME) provides a ligand contact to substrate. 439–443 (EPSFG) contacts substrate.

The protein belongs to the class-II aminoacyl-tRNA synthetase family.

It localises to the cytoplasm. It catalyses the reaction tRNA(Gly) + glycine + ATP = glycyl-tRNA(Gly) + AMP + diphosphate. Functionally, catalyzes the attachment of glycine to tRNA(Gly). In Aeropyrum pernix (strain ATCC 700893 / DSM 11879 / JCM 9820 / NBRC 100138 / K1), this protein is Glycine--tRNA ligase.